The primary structure comprises 420 residues: PHO85 cyclin-6 (420 aa).

3 disordered regions span residues 1-82, 134-155, and 268-321; these read MSIK…ESSF, QGTH…DTSN, and VTTT…GVQR. Over residues 7-22 the composition is skewed to low complexity; it reads SPSSTNASSSPKSTYS. The residue at position 61 (Ser-61) is a Phosphoserine. Residues 134-143 show a composition bias toward polar residues; the sequence is QGTHTVQSST. The segment covering 277–296 has biased composition (basic and acidic residues); the sequence is AKHESPSNESSLDKANRGAD. A phosphoserine mark is found at Ser-281 and Ser-312. Residues 307 to 316 are compositionally biased toward acidic residues; it reads NENDDSDDEN. Residue Thr-317 is modified to Phosphothreonine.

It belongs to the cyclin family. PHO80 subfamily. In terms of assembly, forms a cyclin-CDK complex with PHO85. Interacts with the substrate protein YJL084C. Interacts with elongin-C, which stabilizes PCL6. Interacts with the CDK inhibitor (CKI) PHO81.

The protein localises to the cytoplasm. It is found in the nucleus. Cyclin partner of the cyclin-dependent kinase (CDK) PHO85. Together with cyclin PCL7, controls glycogen phosphorylase and glycogen synthase activities in response to nutrient availablility. The PCL6-PHO85 cyclin-CDK holoenzyme has GLC8 kinase activity and phosphorylates and inactivates the phosphatase PP1-2 inhibitor GLC8, causing activation of PP1-2, which then dephosphorylates and activates glycogen phosphorylase. PCL6-PHO85 also phosphorylates YJL084C. This is PHO85 cyclin-6 (PCL6) from Saccharomyces cerevisiae (strain ATCC 204508 / S288c) (Baker's yeast).